A 222-amino-acid polypeptide reads, in one-letter code: Probable translocation protein y4yL (222 aa).

Helical transmembrane passes span 6–26 (PAIL…LAVV), 52–72 (PNIV…APVA), 158–178 (IGFL…TILM), and 182–202 (MSMV…FVAI).

This sequence belongs to the FliP/MopC/SpaP family.

The protein localises to the cell membrane. In terms of biological role, could be involved in the secretion of an unknown factor. This chain is Probable translocation protein y4yL, found in Sinorhizobium fredii (strain NBRC 101917 / NGR234).